Here is a 61-residue protein sequence, read N- to C-terminus: [Val1,Thr6]-bradykinyl-Gln,Ser (61 aa).

The signal sequence occupies residues 1–22 (MSILKKSLFLVLFLGLVSFSIC). A propeptide spanning residues 23-50 (EEEKREAEEEENEDEIEEQSEEKKRFEP) is cleaved from the precursor. Positions 25–61 (EKREAEEEENEDEIEEQSEEKKRFEPVPPGFTPFRQS) are disordered. Acidic residues predominate over residues 30 to 42 (EEEENEDEIEEQS). Pro52 is subject to 4-hydroxyproline; in form [Val1,Hyp2,Thr6]-Bradykinyl-Gln,Ser and [Val1,Hyp2,Thr6]-Bradykinin.

Belongs to the frog skin active peptide (FSAP) family. Bradykinin-related peptide subfamily. Expressed by the skin glands.

The protein resides in the secreted. In terms of biological role, induces contraction of rat ileum smooth muscle (EC(50)=2.73 uM) but has no activity towards smooth muscle from tail artery, urinary bladder or uterus up to concentrations of 100 uM. Binds to both bradykinin receptor B1 (BDKRB1) and B2 (BDKRB2); the effect via BDKRB1 is stronger. [Val1,Hyp2,Thr6]-bradykinin-Gln,Ser: Induces contraction of rat ileum smooth muscle (EC(50)=710 nM) but has no activity towards smooth muscle from tail artery, urinary bladder or uterus up to concentrations of 100 uM. Binds to both bradykinin receptor B1 (BDKRB1) and B2 (BDKRB2); the effect via BDKRB1 is stronger. Induces contraction of guinea pig ileum smooth muscle. The polypeptide is [Val1,Thr6]-bradykinyl-Gln,Ser (Pithecopus hypochondrialis (Orange-legged leaf frog)).